A 93-amino-acid chain; its full sequence is Neurophysin 1 (93 aa).

Intrachain disulfides connect cysteine 10/cysteine 54, cysteine 13/cysteine 27, cysteine 21/cysteine 44, cysteine 28/cysteine 34, cysteine 61/cysteine 74, cysteine 68/cysteine 86, and cysteine 75/cysteine 80.

This sequence belongs to the vasopressin/oxytocin family.

Its function is as follows. Neurophysin 1 specifically binds oxytocin. The protein is Neurophysin 1 of Struthio camelus (Common ostrich).